Consider the following 43-residue polypeptide: Protein PsbN 1 (43 aa).

A helical membrane pass occupies residues 3-23 (TATILGILIAAAVVGITVLAL).

It belongs to the PsbN family.

The protein resides in the cellular thylakoid membrane. Functionally, may play a role in photosystem I and II biogenesis. This is Protein PsbN 1 from Microcystis aeruginosa (strain NIES-843 / IAM M-2473).